Here is a 448-residue protein sequence, read N- to C-terminus: MGLKLWVKQRRSLPFIIGTIAIALFTDLFLYGIITPILPFSLVDRVGISPDRVQSVISTLLAVYAVANIAASSPIGFLADKFLTRKVPMLIGLIFLTSATALLTFGNSVPMLIVARVLQGLSAAVVWTVGLALLVDVVGADNVGSTMGGIFGFISLGEIIAPVFGGIVYESLGYYASFGVCFIILLLDIALRFLMIEPREMKNDSTLQDVERTSILQRQDTQDHELKPKRSGLFSSLCLPIYSLLHHKQIFGPFWTSFVNSCLFSAFDATIPLELKTLFDFNSLQCGLMFGVLSTPYFFCGAWAGAMVDRRGSRTIGKRAYAILGCTLFLLCIPRTNTSLNIYLFSAFLAINGVVLAFTSSPGFVQSSHYVAEYELEHPTFFGHNGPYTQLFSAYNIVYSLGMIIGPLVAGFLRDQFNFITSIACLSLLCFSASLMANSCFTDRLDSE.

12 helical membrane passes run 14–34 (PFII…YGII), 59–79 (TLLA…GFLA), 87–107 (VPML…TFGN), 120–140 (GLSA…VVGA), 148–168 (GGIF…GGIV), 171–191 (SLGY…DIAL), 250–270 (IFGP…FDAT), 288–308 (LMFG…GAMV), 316–333 (IGKR…LLCI), 338–358 (TSLN…VLAF), 392–412 (FSAY…VAGF), and 417–437 (FNFI…SLMA).

This sequence belongs to the major facilitator superfamily. TCR/Tet family.

It localises to the endoplasmic reticulum. The protein localises to the membrane. This is an uncharacterized protein from Schizosaccharomyces pombe (strain 972 / ATCC 24843) (Fission yeast).